A 902-amino-acid polypeptide reads, in one-letter code: Protein translocase subunit SecA (902 aa).

Residues Gln85, 103 to 107, and Asp492 each bind ATP; that span reads GEGKT. Residues 846–902 form a disordered region; that stretch reads LSYSGGGEEPNQRPKSPRRRSERKIGPNEPCPCGSGKKFKKCHGRVGAPPLPTSQSQ. Residues Cys876, Cys878, Cys887, and His888 each coordinate Zn(2+).

It belongs to the SecA family. Monomer and homodimer. Part of the essential Sec protein translocation apparatus which comprises SecA, SecYEG and auxiliary proteins SecDF. Other proteins may also be involved. The cofactor is Zn(2+).

The protein localises to the cell membrane. It localises to the cytoplasm. It carries out the reaction ATP + H2O + cellular proteinSide 1 = ADP + phosphate + cellular proteinSide 2.. Its function is as follows. Part of the Sec protein translocase complex. Interacts with the SecYEG preprotein conducting channel. Has a central role in coupling the hydrolysis of ATP to the transfer of proteins into and across the cell membrane, serving as an ATP-driven molecular motor driving the stepwise translocation of polypeptide chains across the membrane. The chain is Protein translocase subunit SecA from Rubrobacter xylanophilus (strain DSM 9941 / JCM 11954 / NBRC 16129 / PRD-1).